The following is a 1671-amino-acid chain: MVIQGKRLAASSIQLLASSLDAKKLCYEYDERQAPGVTQITEEAPTEQPPLSTPPSLPQTPNISPISASKIVIDDVALSRVQIVQALVARKLKTAIAQLPTSKSIKELSGGRSSLQNELVGDIHNEFSSIPDAPEQILLRDFGDANPTVQLGKTSSAAVAKLISSKMPSDFNANAIRAHLANKWGLGPLRQTAVLLYAIASEPPSRLASSSAAEEYWDNVSSMYAESCGITLRPRQDTMNEDAMASSAIDPAVVAEFSKGHRRLGVQQFQALAEYLQIDLSGSQASQSDALVAELQQKVDLWTAEMTPEFLAGISPMLDVKKSRRYGSWWNMARQDVLAFYRRPSYSEFVDDALAFKVFLNRLCNRADEALLNMVRSLSCDAYFKQGSLPGYHAASRLLEQAITSTVADCPKARLILPAVGPHTTITKDGTIEYAEAPRQGVSGPTAYIQSLRQGASFIGLKSADVDTQSNLTDALLDAMCLALHNGISFVGKTFLVTGAGQGSIGAGVVRLLLEGGARVLVTTSREPATTSRYFQQMYDNHGAKFSELRVVPCNLASAQDCEGLIRHVYDPRGLNWDLDAILPFAAASDYSTEMHDIRGQSELGHRLMLVNVFRVLGHIVHCKRDAGVDCHPTQVLLPLSPNHGIFGGDGMYPESKLALESLFHRIRSESWSDQLSICGVRIGWTRSTGLMTAHDIIAETVEEHGIRTFSVAEMALNIAMLLTPDFVAHCEDGPLDADFTGSLGTLGSIPGFLAQLHQKVQLAAEVIRAVQAEDEHERFLSPGTKPTLQAPVAPMHPRSSLRVGYPRLPDYEQEIRPLSPRLERLQDPANAVVVVGYSELGPWGSARLRWEIESQGQWTSAGYVELAWLMNLIRHVNDESYVGWVDTQTGKPVRDGEIQALYGDHIDNHTGIRPIQSTSYNPERMEVLQEVAVEEDLPEFEVSQLTADAMRLRHGANVSIRPSGNPDACHVKLKRGAVILVPKTVPFVWGSCAGELPKGWTPAKYGIPENLIHQVDPVTLYTICCVAEAFYSAGITHPLEVFRHIHLSELGNFIGSSMGGPTKTRQLYRDVYFDHEIPSDVLQDTYLNTPAAWVNMLLLGCTGPIKTPVGACATGVESIDSGYESIMAGKTKMCLVGGYDDLQEEASYGFAQLKATVNVEEEIACGRQPSEMSRPMAESRAGFVEAHGCGVQLLCRGDIALQMGLPIYAVIASSAMAADKIGSSVPAPGQGILSFSRERARSSMISVTSRPSSRSSTSSEVSDKSSLTSITSISNPAPRAQRARSTTDMAPLRAALATWGLTIDDLDVASLHGTSTRGNDLNEPEVIETQMRHLGRTPGRPLWAICQKSVTGHPKAPAAAWMLNGCLQVLDSGLVPGNRNLDTLDEALRSASHLCFPTRTVQLREVKAFLLTSFGFGQKGGQVVGVAPKYFFATLPRPEVEGYYRKVRVRTEAGDRAYAAAVMSQAVVKIQTQNPYDEPDAPRIFLDPLARISQDPSTGQYRFRSDATPALDDDALPPPGEPTELVKGISSAWIEEKVRPHMSPGGTVGVDLVPLASFDAYKNAIFVERNYTVRERDWAEKSADVRAAYASRWCAKEAVFKCLQTHSQGAGAAMKEIEIEHGGNGAPKVKLRGAAQTAARQRGLEGVQLSISYGDDAVIAVALGLMSGAS.

The disordered stretch occupies residues 40–60 (ITEEAPTEQPPLSTPPSLPQT). Positions 47-58 (EQPPLSTPPSLP) are enriched in pro residues. The 79-residue stretch at 75–153 (DVALSRVQIV…DANPTVQLGK (79 aa)) folds into the Carrier domain. Serine 113 carries the post-translational modification O-(pantetheine 4'-phosphoryl)serine. The tract at residues 492–729 (GKTFLVTGAG…AMLLTPDFVA (238 aa)) is ketoreductase (KR) domain. The Ketosynthase family 3 (KS3) domain occupies 926 to 1428 (MEVLQEVAVE…QKGGQVVGVA (503 aa)). The active-site For beta-ketoacyl synthase activity is the cysteine 1113. Residues 1244–1270 (SMISVTSRPSSRSSTSSEVSDKSSLTS) show a composition bias toward low complexity. The disordered stretch occupies residues 1244–1288 (SMISVTSRPSSRSSTSSEVSDKSSLTSITSISNPAPRAQRARSTT). Active-site for beta-ketoacyl synthase activity residues include histidine 1313 and histidine 1354. The disordered stretch occupies residues 1497-1521 (PSTGQYRFRSDATPALDDDALPPPG). Aspartate 1552 provides a ligand contact to Mg(2+). Residues 1552-1554 (DLV), 1598-1608 (EAVFKCLQTHS), 1622-1625 (HGGN), and 1652-1654 (ISY) contribute to the acetyl-CoA site. Residue serine 1653 coordinates Mg(2+).

Belongs to the thiolase-like superfamily. Fungal fatty acid synthetase subunit alpha family. In terms of assembly, [Alpha(6)beta(6)] hexamers of two multifunctional subunits (alpha and beta). In terms of processing, 4'-phosphopantetheine is transferred from CoA to a specific serine of the acyl carrier domain by the C-terminal PPT domain. This modification is essential for activity because fatty acids are bound in thioester linkage to the sulfhydryl of the prosthetic group.

The catalysed reaction is acetyl-CoA + n malonyl-CoA + 2n NADPH + 4n H(+) = a long-chain-acyl-CoA + n CoA + n CO2 + 2n NADP(+).. It carries out the reaction a fatty acyl-[ACP] + malonyl-[ACP] + H(+) = a 3-oxoacyl-[ACP] + holo-[ACP] + CO2. The enzyme catalyses a (3R)-hydroxyacyl-[ACP] + NADP(+) = a 3-oxoacyl-[ACP] + NADPH + H(+). It participates in mycotoxin biosynthesis; aflatoxin biosynthesis. In terms of biological role, fatty acid synthase alpha subunit; part of the gene cluster that mediates the biosynthesis of aflatoxins, a group of polyketide-derived furanocoumarins, and part of the most toxic and carcinogenic compounds among the known mycotoxins. The four major aflatoxins produced by A.parasiticus are aflatoxin B1 (AFB1), aflatoxin B2 (AFB2), aflatoxin G1 (AFG1) and aflatoxin G2 (AFG2). Within the aflatoxin pathway, the fungal fatty acid synthase aflA/aflB provides the hexanoyl starter unit to the acyl-carrier protein (ACP) domain of the norsolorinic acid synthase to allow the first step of the pathway. The biosynthesis of aflatoxins begins with the norsolorinic acid synthase aflC that combines a hexanoyl starter unit produced by the fatty acid synthase aflA/aflB and 7 malonyl-CoA extender units to synthesize the precursor NOR. The second step is the conversion of NOR to averantin (AVN) and requires the norsolorinic acid ketoreductase aflD, which catalyzes the dehydration of norsolorinic acid to form (1'S)-averantin. The norsolorinic acid reductases aflE and aflF may also play a role in the conversion of NOR to AVN. The cytochrome P450 monooxygenase aflG then catalyzes the hydroxylation of AVN to 5'hydroxyaverantin (HAVN). The next step is performed by the 5'-hydroxyaverantin dehydrogenase aflH that transforms HAVN to 5'-oxoaverantin (OAVN) which is further converted to averufin (AVF) by aflK that plays a dual role in the pathway, as a 5'-oxoaverantin cyclase that mediates conversion of 5'-oxoaverantin, as well as a versicolorin B synthase in a later step in the pathway. The averufin oxidase aflI catalyzes the conversion of AVF to versiconal hemiacetal acetate (VHA). VHA is then the substrate for the versiconal hemiacetal acetate esterase aflJ to yield versiconal (VAL). Versicolorin B synthase aflK then converts VAL to versicolorin B (VERB) by closing the bisfuran ring of aflatoxin which is required for DNA-binding, thus giving to aflatoxin its activity as a mutagen. Then, the activity of the versicolorin B desaturase aflL leads to versicolorin A (VERA). A branch point starts from VERB since it can also be converted to dihydrodemethylsterigmatocystin (DMDHST), probably also by aflL, VERA being a precursor for aflatoxins B1 and G1, and DMDHST for aflatoxins B2 and G2. Next, the versicolorin reductase aflM and the cytochrome P450 monooxygenase aflN are involved in conversion of VERA to demethylsterigmatocystin (DMST). AflX and aflY seem also involved in this step, through probable aflX-mediated epoxide ring-opening step following versicolorin A oxidation and aflY-mediated Baeyer-Villiger oxidation required for the formation of the xanthone ring. The methyltransferase aflO then leads to the modification of DMST to sterigmatocystin (ST), and of DMDHST to dihydrosterigmatocystin (DHST). Both ST and DHST are then substrates of the O-methyltransferase aflP to yield O-methylsterigmatocystin (OMST) and dihydro-O-methylsterigmatocystin (DHOMST), respectively. Finally OMST is converted to aflatoxins B1 and G1, and DHOMST to aflatoxins B2 and G2, via the action of several enzymes including O-methylsterigmatocystin oxidoreductase aflQ, the cytochrome P450 monooxygenase aflU, but also the NADH-dependent flavin oxidoreductase nadA which is specifically required for the synthesis of AFG1. The polypeptide is Fatty acid synthase alpha subunit aflA (Aspergillus parasiticus (strain ATCC 56775 / NRRL 5862 / SRRC 143 / SU-1)).